The following is a 353-amino-acid chain: Ion-translocating oxidoreductase complex subunit D (353 aa).

4 consecutive transmembrane segments (helical) span residues 20-40, 44-64, 77-108, and 123-143; these read IMLLVLIATLPGIAAQWYYFG, IIQVLIASVAALVAEAAILHL, SALLTALLLGVSIPSLAPWWMVTIGTVFAIII, and PAMVGYVVLVISFPVQMTSWL. Threonine 187 carries the post-translational modification FMN phosphoryl threonine. The next 4 membrane-spanning stretches (helical) occupy residues 214 to 234, 242 to 262, 267 to 287, and 301 to 318; these read VIAGIGWQWVNVGFLLGGVFL, WHIPVSFIASLAFFATLGWLL, LVTPMIHLFSGATMLGAFFIA, and LLYGVLIGLLTWLIRSYG.

It belongs to the NqrB/RnfD family. The complex is composed of six subunits: RnfA, RnfB, RnfC, RnfD, RnfE and RnfG. It depends on FMN as a cofactor.

The protein localises to the cell inner membrane. Its function is as follows. Part of a membrane-bound complex that couples electron transfer with translocation of ions across the membrane. This Erwinia tasmaniensis (strain DSM 17950 / CFBP 7177 / CIP 109463 / NCPPB 4357 / Et1/99) protein is Ion-translocating oxidoreductase complex subunit D.